A 1100-amino-acid chain; its full sequence is Exportin-T (1100 aa).

The protein belongs to the exportin family. In terms of assembly, interacts with GSP1, GSP2, NSP1, NUP2 and UTP8.

It is found in the nucleus. Its subcellular location is the cytoplasm. Functionally, tRNA nucleus export receptor which facilitates tRNA translocation across the nuclear pore complex. Preferentially interacts with tRNAs with mature 5'- and 3'-termini and does not distinguish between intron-containing and spliced tRNAs. In the nucleus binds to tRNA and to the Ran-GTPases GSP1 or GSP2 in their active GTP-bound form. Docking of this trimeric complex to the nuclear pore complex (NPC) is mediated through binding to nucleoporins. Upon transit of a nuclear export complex into the cytoplasm, disassembling of the complex and hydrolysis of Ran-GTP to Ran-GDP cause release of the tRNA from the export receptor. The directionality of nuclear export is thought to be conferred by an asymmetric distribution of the GTP- and GDP-bound forms of Ran between the cytoplasm and nucleus. Involved in pre-tRNA splicing, probably by affecting the interaction of pre-tRNA with splicing endonuclease. The sequence is that of Exportin-T (LOS1) from Saccharomyces cerevisiae (strain YJM789) (Baker's yeast).